Consider the following 235-residue polypeptide: Large ribosomal subunit protein uL1 (235 aa).

The protein belongs to the universal ribosomal protein uL1 family. As to quaternary structure, part of the 50S ribosomal subunit.

Functionally, binds directly to 23S rRNA. The L1 stalk is quite mobile in the ribosome, and is involved in E site tRNA release. Protein L1 is also a translational repressor protein, it controls the translation of the L11 operon by binding to its mRNA. In Thermobifida fusca (strain YX), this protein is Large ribosomal subunit protein uL1.